A 185-amino-acid polypeptide reads, in one-letter code: Ribosome-recycling factor (185 aa).

A disordered region spans residues 144 to 164 (KEGEAGEDEVGRAEKDLDKTT).

It belongs to the RRF family.

The protein localises to the cytoplasm. Functionally, responsible for the release of ribosomes from messenger RNA at the termination of protein biosynthesis. May increase the efficiency of translation by recycling ribosomes from one round of translation to another. The sequence is that of Ribosome-recycling factor from Mycobacterium tuberculosis (strain CDC 1551 / Oshkosh).